The primary structure comprises 100 residues: Large ribosomal subunit protein uL23 (100 aa).

The protein belongs to the universal ribosomal protein uL23 family. In terms of assembly, part of the 50S ribosomal subunit. Contacts protein L29, and trigger factor when it is bound to the ribosome.

One of the early assembly proteins it binds 23S rRNA. One of the proteins that surrounds the polypeptide exit tunnel on the outside of the ribosome. Forms the main docking site for trigger factor binding to the ribosome. This Shewanella pealeana (strain ATCC 700345 / ANG-SQ1) protein is Large ribosomal subunit protein uL23.